Here is a 914-residue protein sequence, read N- to C-terminus: Solute carrier family 12 member 9 (914 aa).

The Cytoplasmic portion of the chain corresponds to 1–36 (MASESSPLLAYRLLGEEGVALPANGAGGPGGASARK). A Phosphoserine modification is found at Ser-6. The chain crosses the membrane as a helical span at residues 37–57 (LSTFLGVVVPTVLSMFSIVVF). Residues 58–72 (LRIGFVVGHAGLLQA) lie on the Extracellular side of the membrane. A helical transmembrane segment spans residues 73–93 (LAMLLVAYFILALTVLSVCAI). The Cytoplasmic segment spans residues 94–119 (ATNGAVQGGGAYFMISRTLGPEVGGS). The helical transmembrane segment at 120-140 (IGLMFYLANVCGCAVSLLGLV) threads the bilayer. Residues 141 to 167 (ESVLDVFGADATGPSGLRVLPQGYGWN) are Extracellular-facing. A helical transmembrane segment spans residues 168–188 (LLYGSLLLGLVGGVCTLGAGL). Over 189-193 (YARAS) the chain is Cytoplasmic. A helical transmembrane segment spans residues 194–214 (FLTFLLVSGSLASVLISFVAV). At 215 to 262 (GPRDIRLTPRPGPNGSSLPPRFGHFTGFNSSTLKDNLGAGYAEDYTTG) the chain is on the extracellular side. 2 N-linked (GlcNAc...) asparagine glycosylation sites follow: Asn-228 and Asn-243. Residues 263-283 (AVMNFASVFAVLFNGCTGIMA) traverse the membrane as a helical segment. Over 284-297 (GANMSGELKDPSRA) the chain is Cytoplasmic. The chain crosses the membrane as a helical span at residues 298–318 (IPLGTIVAVAYTFFVYVLLFF). Residues 319–338 (LSSFTCDRTLLQEDYGFFRA) are Extracellular-facing. Residues 339 to 359 (ISLWPPLVLIGIYATALSASM) form a helical membrane-spanning segment. At 360–390 (SSLIGASRILHALARDDLFGVILAPAKVVSR) the chain is on the cytoplasmic side. A helical membrane pass occupies residues 391–411 (GGNPWAAVLYSWGLVQLVLLA). The Extracellular portion of the chain corresponds to 412–416 (GKLNT). The chain crosses the membrane as a helical span at residues 417-437 (LAAVVTVFYLVAYAAVDLSCL). Residues 438 to 466 (SLEWASAPNFRPTFSLFSWHTCLLGVASC) are Cytoplasmic-facing. Residues 467–487 (LLMMFLISPGAAGGSLLLMGL) form a helical membrane-spanning segment. Residues 488–740 (LAALLTARGG…LLRPRGGPGY (253 aa)) lie on the Extracellular side of the membrane. The segment at 642-678 (LTDPAFSEPADSTREGSSPALSTLFPPPRAPGSPRAL) is disordered. The chain crosses the membrane as a helical span at residues 741 to 761 (VDVCGLFLLQMATILGMVPAW). At 762-914 (HSARLRIFLC…GVTPVTCTDL (153 aa)) the chain is on the cytoplasmic side. The disordered stretch occupies residues 844–863 (QQGRGTGGGPGGPEGGDAEG). Residues 847–858 (RGTGGGPGGPEG) show a composition bias toward gly residues.

This sequence belongs to the SLC12A transporter family. Interacts with SLC12A1. Highly expressed in placenta, brain and kidney. Lower expression in lung, liver and heart.

Its subcellular location is the cell membrane. It is found in the lysosome membrane. Functionally, may be an inhibitor of SLC12A1. Seems to correspond to a subunit of a multimeric transport system and thus, additional subunits may be required for its function. May play a role in lysosomal ion flux and osmoregulation. The protein is Solute carrier family 12 member 9 (SLC12A9) of Homo sapiens (Human).